We begin with the raw amino-acid sequence, 220 residues long: Flavin-dependent thymidylate synthase (220 aa).

Positions 1-208 (MKIDILDKGF…PWTFEAFLKY (208 aa)) constitute a ThyX domain. FAD-binding positions include Thr55, 78-80 (RHR), and Glu86. DUMP-binding positions include 75–78 (QWFR), 86–90 (ELSGR), and Arg147. A ThyX motif motif is present at residues 78-88 (RHRIASYNELS). FAD contacts are provided by residues 163-165 (NAR) and Asn169. Arg174 is a binding site for dUMP. Arg174 functions as the Involved in ionization of N3 of dUMP, leading to its activation in the catalytic mechanism.

It belongs to the thymidylate synthase ThyX family. In terms of assembly, homotetramer. FAD serves as cofactor.

It catalyses the reaction dUMP + (6R)-5,10-methylene-5,6,7,8-tetrahydrofolate + NADPH + H(+) = dTMP + (6S)-5,6,7,8-tetrahydrofolate + NADP(+). The protein operates within pyrimidine metabolism; dTTP biosynthesis. In terms of biological role, catalyzes the reductive methylation of 2'-deoxyuridine-5'-monophosphate (dUMP) to 2'-deoxythymidine-5'-monophosphate (dTMP) while utilizing 5,10-methylenetetrahydrofolate (mTHF) as the methyl donor, and NADPH and FADH(2) as the reductant. The protein is Flavin-dependent thymidylate synthase of Thermotoga sp. (strain RQ2).